Here is a 1272-residue protein sequence, read N- to C-terminus: Myosin-3 (1272 aa).

The segment at 1–20 (MAVIKKGARRKDVKEPKKRS) is disordered. In terms of domain architecture, Myosin motor spans 36 to 715 (VGISDLTLLS…SLFALEDMRD (680 aa)). Residue 129-136 (GESGAGKT) participates in ATP binding. Ser357 is subject to Phosphoserine. The actin-binding stretch occupies residues 588-610 (ANELVETLSKAEPSYIRTIKPNQ). IQ domains are found at residues 719-739 (YNMA…RIDA) and 740-765 (AIKI…YGTK). Positions 771-961 (KERRSMSLLG…TIYVRRGHPA (191 aa)) constitute a TH1 domain. Disordered stretches follow at residues 951–1015 (STIY…QKPV), 1029–1141 (YNPK…SELP), and 1217–1272 (VQFG…DDDW). Residues 980-1000 (IKSKKSKHKSTHKHTHSHRSH) show a composition bias toward basic residues. Residues 1066–1078 (KKASSSHKSSSAK) show a composition bias toward low complexity. Residues 1089–1098 (GVEKNKEPLK) show a composition bias toward basic and acidic residues. Pro residues predominate over residues 1109–1118 (PIPPPPPPMG). Residues 1120-1182 (PKDPKFEAAY…PTAYMTPYKD (63 aa)) form the SH3 domain. Residues 1217–1236 (VQFGSATVGPTSDNQSNPVG) show a composition bias toward polar residues. The segment covering 1258–1272 (ADDDDNDDGDDDDDW) has biased composition (acidic residues).

Belongs to the TRAFAC class myosin-kinesin ATPase superfamily. Myosin family. As to quaternary structure, interacts (via myosin motor domain) with SHE4; this interaction is important for proper localization and may regulate the interaction of the motor domain with actin. Interacts (via SH3 domain) with VRP1; this interaction is required for localization to sites of polarized growth and may regulate the interaction of the tail domain with actin. Interacts (via SH3 domain) with PAN1; this interaction is important for late stages of endocytopsis. Interacts (via SH3 domain) with BBC1 and LAS17. Interacts (via C-terminal acidic tail) with ARC19 and ARC40; ARC19 and ARC40 are Arp2/3 complex subunits. Post-translationally, phosphorylation of the TEDS site (Ser-357) is required for the polarization of the actin cytoskeleton and for ligand-induced, but not for constitutive internalization of STE2. Phosphorylation probably activates the myosin-I ATPase. Ser-357 is phosphorylated by CLA4 and STE20 in vitro.

It localises to the cytoplasm. Its subcellular location is the cytoskeleton. It is found in the actin patch. Functionally, one of two redundant type-I myosins implicated in the organization of the actin cytoskeleton. Required for proper actin cytoskeleton polarization and for the internalization step in endocytosis. At the cell cortex, assembles in patch-like structures together with proteins from the actin-polymerizing machinery and promotes actin assembly. Functions redundantly with LAS17 as actin nucleation-promoting factor (NPF) for the Arp2/3 complex. Motor domain phosphorylation by PAK kinases CLA4 and STE20 promotes CDC42-regulated actin assembly. Functions together with the NPF PAN1 in late stages of endocytosis. Motor domain phosphorylation by PDK1 kinases PKH1 and PKH2, and by SGK kinases YPK1 and YPK2, promotes ligand-induced, but not constitutive endocytosis of the G protein-coupled receptor STE2. The protein is Myosin-3 (MYO3) of Saccharomyces cerevisiae (strain ATCC 204508 / S288c) (Baker's yeast).